An 80-amino-acid polypeptide reads, in one-letter code: Protein Vpu (80 aa).

The Extracellular segment spans residues 1–6; the sequence is MQSLIA. A helical membrane pass occupies residues 7–27; sequence AIVALVVVAIIAIVVWSIVFI. The Cytoplasmic portion of the chain corresponds to 28-80; that stretch reads EYRKILRQRKIDRLIDRIRERAEDSGNESEGDQEELSALVEMGHDAPWDIDDL. A disordered region spans residues 49–80; the sequence is AEDSGNESEGDQEELSALVEMGHDAPWDIDDL. 2 positions are modified to phosphoserine; by host CK2: Ser-52 and Ser-56. The segment covering 52 to 62 has biased composition (acidic residues); sequence SGNESEGDQEE.

This sequence belongs to the HIV-1 VPU protein family. As to quaternary structure, homopentamer. Interacts with host CD4 and BRTC; these interactions induce proteasomal degradation of CD4. Interacts with host BST2; this interaction leads to the degradation of host BST2. Interacts with host FBXW11. Interacts with host AP1M1; this interaction plays a role in the mistrafficking and subsequent degradation of host BST2. Interacts with host RANBP2; this interaction allows Vpu to down-regulate host BLM sumoylation. Post-translationally, phosphorylated by host CK2. This phosphorylation is necessary for interaction with human BTRC and degradation of CD4.

It localises to the host membrane. With respect to regulation, ion channel activity is inhibited by hexamethylene amiloride in vitro. Enhances virion budding by targeting host CD4 and Tetherin/BST2 to proteasome degradation. Degradation of CD4 prevents any unwanted premature interactions between viral Env and its host receptor CD4 in the endoplasmic reticulum. Degradation of antiretroviral protein Tetherin/BST2 is important for virion budding, as BST2 tethers new viral particles to the host cell membrane. Mechanistically, Vpu bridges either CD4 or BST2 to BTRC, a substrate recognition subunit of the Skp1/Cullin/F-box protein E3 ubiquitin ligase, induces their ubiquitination and subsequent proteasomal degradation. The alteration of the E3 ligase specificity by Vpu seems to promote the degradation of host IKBKB, leading to NF-kappa-B down-regulation and subsequent apoptosis. Acts as a viroporin that forms an oligomeric ion channel in membranes. Modulates the host DNA repair mechanisms to promote degradation of nuclear viral cDNA in cells that are already productively infected in order to suppress immune sensing and proviral hyper-integration (superinfection). Manipulates PML-NBs and modulates SUMOylation of host BLM protein thereby enhancing its DNA-end processing activity toward viral unintegrated linear DNA. Also inhibits RAD52-mediated homologous repair of viral cDNA, preventing the generation of dead-end circular forms of single copies of the long terminal repeat and permitting sustained nucleolytic attack. This is Protein Vpu from Human immunodeficiency virus type 1 group M subtype B (isolate JH32) (HIV-1).